A 211-amino-acid chain; its full sequence is Redox-sensing transcriptional repressor Rex (211 aa).

Positions 13–52 (TYLRILEELEAQGVHRTSSEQLGELAQVTAFQVRKDLSYF) form a DNA-binding region, H-T-H motif. 87–92 (GMGRLG) contributes to the NAD(+) binding site.

This sequence belongs to the transcriptional regulatory Rex family. As to quaternary structure, homodimer.

The protein resides in the cytoplasm. Functionally, modulates transcription in response to changes in cellular NADH/NAD(+) redox state. The chain is Redox-sensing transcriptional repressor Rex from Thermus aquaticus.